Here is a 219-residue protein sequence, read N- to C-terminus: MEQQQPQQQNDGQQQQQQQQQHQQQQQQQQQQQQQQQQSEQERIYNKKQEHLPLLQTVEELVEELRRSLIVVEEFQTPSQQLLFDKLNKIINLYEKIESNRHIVNDVEIPLEIFRVIDQSKNPDLYVKETLQNCLSANEKTKGKIESIKNFKKELESHISESFASEYAEYKLLTQKKETQEQQNDDQIKVDDSNNNNNNNNNNNYNNNNNNNNNNINNN.

A compositionally biased stretch (low complexity) spans 1 to 39 (MEQQQPQQQNDGQQQQQQQQQHQQQQQQQQQQQQQQQQS). Disordered regions lie at residues 1–42 (MEQQ…SEQE) and 177–219 (KETQ…INNN). Coiled coils occupy residues 13 to 74 (QQQQ…VVEE) and 166 to 219 (EYAE…INNN). A compositionally biased stretch (basic and acidic residues) spans 177–192 (KETQEQQNDDQIKVDD). The segment covering 194 to 219 (NNNNNNNNNNNYNNNNNNNNNNINNN) has biased composition (low complexity).

It belongs to the Mediator complex subunit 10 family. As to quaternary structure, component of the Mediator complex.

It is found in the nucleus. Functionally, component of the Mediator complex, a coactivator involved in the regulated transcription of nearly all RNA polymerase II-dependent genes. Mediator functions as a bridge to convey information from gene-specific regulatory proteins to the basal RNA polymerase II transcription machinery. Mediator is recruited to promoters by direct interactions with regulatory proteins and serves as a scaffold for the assembly of a functional preinitiation complex with RNA polymerase II and the general transcription factors. This is Putative mediator of RNA polymerase II transcription subunit 10 (med10) from Dictyostelium discoideum (Social amoeba).